The primary structure comprises 190 residues: Segregation and condensation protein B (190 aa).

It belongs to the ScpB family. As to quaternary structure, homodimer. Homodimerization may be required to stabilize the binding of ScpA to the Smc head domains. Component of a cohesin-like complex composed of ScpA, ScpB and the Smc homodimer, in which ScpA and ScpB bind to the head domain of Smc. The presence of the three proteins is required for the association of the complex with DNA.

It is found in the cytoplasm. In terms of biological role, participates in chromosomal partition during cell division. May act via the formation of a condensin-like complex containing Smc and ScpA that pull DNA away from mid-cell into both cell halves. The chain is Segregation and condensation protein B from Bacillus cereus (strain G9842).